A 186-amino-acid polypeptide reads, in one-letter code: MINRNANRDRDRSRSNDKELKINYRIKAREVRVIFENGIQEVLSIEDAIKKAKEAGLDLVEVSPNVSPPVCKIIDYGKYKFHQEKRQKEQKKNQKVIKLKEVRMQPKIDTHDLDFKSKNILSFLKDGNKVKVTIRFRGRELAHTYLGYDILNSILEKVGEVNYVLESAAKMEGKTMFLIVAPKFKK.

Belongs to the IF-3 family. Monomer.

The protein resides in the cytoplasm. In terms of biological role, IF-3 binds to the 30S ribosomal subunit and shifts the equilibrium between 70S ribosomes and their 50S and 30S subunits in favor of the free subunits, thus enhancing the availability of 30S subunits on which protein synthesis initiation begins. This Borrelia garinii subsp. bavariensis (strain ATCC BAA-2496 / DSM 23469 / PBi) (Borreliella bavariensis) protein is Translation initiation factor IF-3.